Consider the following 165-residue polypeptide: Small ribosomal subunit protein uS5 (165 aa).

In terms of domain architecture, S5 DRBM spans 13–76 (LEEKVLVVNR…EAARKNLITI (64 aa)).

Belongs to the universal ribosomal protein uS5 family. In terms of assembly, part of the 30S ribosomal subunit. Contacts proteins S4 and S8.

In terms of biological role, with S4 and S12 plays an important role in translational accuracy. Its function is as follows. Located at the back of the 30S subunit body where it stabilizes the conformation of the head with respect to the body. The sequence is that of Small ribosomal subunit protein uS5 from Chlamydia abortus (strain DSM 27085 / S26/3) (Chlamydophila abortus).